The sequence spans 2287 residues: Protein Ycf2 (2287 aa).

ATP is bound at residue 1632–1639 (GSIGTGRS).

The protein belongs to the Ycf2 family.

Its subcellular location is the plastid. The protein resides in the chloroplast stroma. In terms of biological role, probable ATPase of unknown function. Its presence in a non-photosynthetic plant (Epifagus virginiana) and experiments in tobacco indicate that it has an essential function which is probably not related to photosynthesis. This chain is Protein Ycf2, found in Calycanthus floridus var. glaucus (Eastern sweetshrub).